The chain runs to 220 residues: Octanoyltransferase (220 aa).

Residues 27-208 (PGTADEIWLC…QLARAHGQAV (182 aa)) enclose the BPL/LPL catalytic domain. Substrate-binding positions include 66–73 (RGGQVTYH), 139–141 (ALG), and 152–154 (GLA). Cys170 acts as the Acyl-thioester intermediate in catalysis.

The protein belongs to the LipB family.

It is found in the cytoplasm. The enzyme catalyses octanoyl-[ACP] + L-lysyl-[protein] = N(6)-octanoyl-L-lysyl-[protein] + holo-[ACP] + H(+). The protein operates within protein modification; protein lipoylation via endogenous pathway; protein N(6)-(lipoyl)lysine from octanoyl-[acyl-carrier-protein]: step 1/2. Functionally, catalyzes the transfer of endogenously produced octanoic acid from octanoyl-acyl-carrier-protein onto the lipoyl domains of lipoate-dependent enzymes. Lipoyl-ACP can also act as a substrate although octanoyl-ACP is likely to be the physiological substrate. In Bordetella bronchiseptica (strain ATCC BAA-588 / NCTC 13252 / RB50) (Alcaligenes bronchisepticus), this protein is Octanoyltransferase.